Consider the following 409-residue polypeptide: Translation initiation factor 2 subunit gamma (409 aa).

A tr-type G domain is found at 7–203; it reads QPEVNIGLVG…AIEREIPTPE (197 aa). The segment at 16–23 is G1; it reads GHVDHGKT. D19, T23, G44, and S46 together coordinate Mg(2+). 19 to 24 contacts GTP; sequence DHGKTT. Residues 44–48 form a G2 region; that stretch reads GISIR. Residues 90-93 form a G3 region; the sequence is DAPG. GTP is bound by residues 146–149 and 181–183; these read NKID and SAQ. Residues 146 to 149 are G4; it reads NKID. The tract at residues 181–183 is G5; it reads SAQ.

The protein belongs to the TRAFAC class translation factor GTPase superfamily. Classic translation factor GTPase family. EIF2G subfamily. Heterotrimer composed of an alpha, a beta and a gamma chain. Requires Mg(2+) as cofactor.

It carries out the reaction GTP + H2O = GDP + phosphate + H(+). In terms of biological role, eIF-2 functions in the early steps of protein synthesis by forming a ternary complex with GTP and initiator tRNA. The protein is Translation initiation factor 2 subunit gamma of Haloquadratum walsbyi (strain DSM 16790 / HBSQ001).